Consider the following 86-residue polypeptide: Exodeoxyribonuclease 7 small subunit (86 aa).

The tract at residues 1–26 (MQDELFETEKAPQKNAKNAKNAPKKS) is disordered.

It belongs to the XseB family. As to quaternary structure, heterooligomer composed of large and small subunits.

It is found in the cytoplasm. The catalysed reaction is Exonucleolytic cleavage in either 5'- to 3'- or 3'- to 5'-direction to yield nucleoside 5'-phosphates.. In terms of biological role, bidirectionally degrades single-stranded DNA into large acid-insoluble oligonucleotides, which are then degraded further into small acid-soluble oligonucleotides. This Helicobacter pylori (strain J99 / ATCC 700824) (Campylobacter pylori J99) protein is Exodeoxyribonuclease 7 small subunit.